A 244-amino-acid chain; its full sequence is Type III pantothenate kinase (244 aa).

9–16 (DAGNSSLK) is a binding site for ATP. Substrate is bound by residues Tyr90 and 97–100 (GVDR). Asp99 functions as the Proton acceptor in the catalytic mechanism. Residue Thr122 participates in ATP binding. A substrate-binding site is contributed by Thr172.

Belongs to the type III pantothenate kinase family. As to quaternary structure, homodimer. Requires NH4(+) as cofactor. K(+) is required as a cofactor.

Its subcellular location is the cytoplasm. The catalysed reaction is (R)-pantothenate + ATP = (R)-4'-phosphopantothenate + ADP + H(+). It functions in the pathway cofactor biosynthesis; coenzyme A biosynthesis; CoA from (R)-pantothenate: step 1/5. Functionally, catalyzes the phosphorylation of pantothenate (Pan), the first step in CoA biosynthesis. The polypeptide is Type III pantothenate kinase (Thiobacillus denitrificans (strain ATCC 25259 / T1)).